The following is a 230-amino-acid chain: Protein RESPONSE TO ABA AND SALT 1 (230 aa).

Positions 7 to 230 (SQSFTIFVDG…RLRDRDQERA (224 aa)) constitute a DOG1 domain.

Negative regulator of salt (NaCl) tolerance probably by enhancing abscisic acid (ABA) sensitivity. This chain is Protein RESPONSE TO ABA AND SALT 1, found in Arabidopsis thaliana (Mouse-ear cress).